A 363-amino-acid chain; its full sequence is MNKNKIIVPLSNNSYEVTIRQGIINSIGKELTQIGINNNRKILIVSNKEISNLFGSKLLNDLKKYNFSAEIFNIKAGESYKNLASLREIYDAAFEFGLDRNALLIALGGGIVGDVTGFAAATWLRGIDYIQIPTTLLSMVDSSVGGKTAVNHPKGKNLIGAFYQPKAVFIDPETLKTLPIREFKAGMAEVIKYGVIKDKELFEYLEIDKNREKILNLDNESLIKIINKSIRTKSYIVSKDEKENGIRAILNYGHSFGHVIENLCGYGEYLHGEAISIGMKIAGDISTEKNLWLKEDSLRQDKLIESYGLPTQTPKIKKHDVITILMGDKKVRDGKMRFILPKGIGEVDIFNDIKESQFLKYFD.

NAD(+) contacts are provided by residues 134–135, Lys-147, Lys-156, and 174–177; these read TT and TLKT. Glu-189, His-254, and His-271 together coordinate Zn(2+).

Belongs to the sugar phosphate cyclases superfamily. Dehydroquinate synthase family. Requires Co(2+) as cofactor. It depends on Zn(2+) as a cofactor. NAD(+) is required as a cofactor.

Its subcellular location is the cytoplasm. The catalysed reaction is 7-phospho-2-dehydro-3-deoxy-D-arabino-heptonate = 3-dehydroquinate + phosphate. It participates in metabolic intermediate biosynthesis; chorismate biosynthesis; chorismate from D-erythrose 4-phosphate and phosphoenolpyruvate: step 2/7. Its function is as follows. Catalyzes the conversion of 3-deoxy-D-arabino-heptulosonate 7-phosphate (DAHP) to dehydroquinate (DHQ). The sequence is that of 3-dehydroquinate synthase from Prochlorococcus marinus (strain MIT 9515).